The primary structure comprises 192 residues: Inosine triphosphate pyrophosphatase (192 aa).

10 to 15 contacts ITP; it reads TGNANK. E43 is a binding site for Mg(2+). ITP-binding positions include K56, 74-75, K91, 149-152, K173, and 178-179; these read DT, FGWD, and HR.

It belongs to the HAM1 NTPase family. In terms of assembly, homodimer. Requires Mg(2+) as cofactor. Mn(2+) is required as a cofactor.

It localises to the cytoplasm. The protein resides in the nucleus. The enzyme catalyses ITP + H2O = IMP + diphosphate + H(+). It catalyses the reaction dITP + H2O = dIMP + diphosphate + H(+). The catalysed reaction is XTP + H2O = XMP + diphosphate + H(+). Functionally, pyrophosphatase that hydrolyzes non-canonical purine nucleotides such as inosine triphosphate (ITP), deoxyinosine triphosphate (dITP) or xanthosine 5'-triphosphate (XTP) to their respective monophosphate derivatives. The enzyme does not distinguish between the deoxy- and ribose forms. Probably excludes non-canonical purines from RNA and DNA precursor pools, thus preventing their incorporation into RNA and DNA and avoiding chromosomal lesions. This Candida glabrata (strain ATCC 2001 / BCRC 20586 / JCM 3761 / NBRC 0622 / NRRL Y-65 / CBS 138) (Yeast) protein is Inosine triphosphate pyrophosphatase.